A 250-amino-acid chain; its full sequence is Galectin-3 (250 aa).

The tract at residues 1–60 is disordered; the sequence is MADNFSLHDALSGSGNPNPQGWPGAWGNQPAGAGGYPGASYPGAYPGQAPPGAYPGQAPP. Ala2 is subject to N-acetylalanine. Phosphoserine is present on residues Ser6 and Ser12. 3 tandem repeats follow at residues 36–44, 45–53, and 54–62. The segment at 36-109 is 8 X 9 AA tandem repeats of Y-P-G-X(3)-P-G-A; the sequence is YPGASYPGAY…AYPATGPYGA (74 aa). A compositionally biased stretch (low complexity) spans 38-47; that stretch reads GASYPGAYPG. A compositionally biased stretch (pro residues) spans 48 to 60; it reads QAPPGAYPGQAPP. The stretch at 63–69 is one 4; approximate repeat; that stretch reads YPGAPGA. Residues 70–78 form repeat 5; that stretch reads YPGAPAPGV. A 6; approximate repeat occupies 79–88; it reads YPGPPSGPGA. Residues 89–100 form a 7; approximate repeat; it reads YPSSGQPSATGA. One copy of the 8; approximate repeat lies at 101–109; it reads YPATGPYGA. A Galectin domain is found at 118-248; it reads YNLPLPGGVV…DIDLTSASYT (131 aa). 181-187 is a binding site for a beta-D-galactoside; the sequence is WGREERQ. Ser188 bears the Phosphoserine mark. The Nuclear export signal motif lies at 226 to 241; the sequence is KKLNEISKLGISGDID.

In terms of assembly, probably forms homo- or heterodimers. Interacts with DMBT1. Interacts with CD6 and ALCAM. Forms a complex with the ITGA3, ITGB1 and CSPG4. Interacts with LGALS3BP, LYPD3, ZFTRAF1 and UACA. Interacts with TRIM16; this interaction mediates autophagy of damage endomembranes. Interacts with cargo receptor TMED10; the interaction mediates the translocation from the cytoplasm into the ERGIC (endoplasmic reticulum-Golgi intermediate compartment) and thereby secretion. In terms of tissue distribution, a major expression is found in the colonic epithelium. It is also abundant in the activated macrophages. Expressed in fetal membranes.

Its subcellular location is the cytoplasm. The protein resides in the nucleus. The protein localises to the secreted. Functionally, galactose-specific lectin which binds IgE. May mediate with the alpha-3, beta-1 integrin the stimulation by CSPG4 of endothelial cells migration. Together with DMBT1, required for terminal differentiation of columnar epithelial cells during early embryogenesis. In the nucleus: acts as a pre-mRNA splicing factor. Involved in acute inflammatory responses including neutrophil activation and adhesion, chemoattraction of monocytes macrophages, opsonization of apoptotic neutrophils, and activation of mast cells. Together with TRIM16, coordinates the recognition of membrane damage with mobilization of the core autophagy regulators ATG16L1 and BECN1 in response to damaged endomembranes. This is Galectin-3 from Homo sapiens (Human).